A 1401-amino-acid polypeptide reads, in one-letter code: DNA-directed RNA polymerase subunit beta' (1401 aa).

The Zn(2+) site is built by C70, C72, C85, and C88. 3 residues coordinate Mg(2+): D460, D462, and D464. Positions 808, 882, 889, and 892 each coordinate Zn(2+).

It belongs to the RNA polymerase beta' chain family. The RNAP catalytic core consists of 2 alpha, 1 beta, 1 beta' and 1 omega subunit. When a sigma factor is associated with the core the holoenzyme is formed, which can initiate transcription. It depends on Mg(2+) as a cofactor. Zn(2+) serves as cofactor.

The catalysed reaction is RNA(n) + a ribonucleoside 5'-triphosphate = RNA(n+1) + diphosphate. Its function is as follows. DNA-dependent RNA polymerase catalyzes the transcription of DNA into RNA using the four ribonucleoside triphosphates as substrates. This chain is DNA-directed RNA polymerase subunit beta', found in Legionella pneumophila (strain Lens).